The primary structure comprises 184 residues: Probable RNA 2'-phosphotransferase (184 aa).

Belongs to the KptA/TPT1 family.

Its function is as follows. Removes the 2'-phosphate from RNA via an intermediate in which the phosphate is ADP-ribosylated by NAD followed by a presumed transesterification to release the RNA and generate ADP-ribose 1''-2''-cyclic phosphate (APPR&gt;P). May function as an ADP-ribosylase. The protein is Probable RNA 2'-phosphotransferase of Escherichia coli (strain K12 / MC4100 / BW2952).